We begin with the raw amino-acid sequence, 54 residues long: Ovomucoid (54 aa).

The region spanning 4 to 54 is the Kazal-like domain; it reads VDCSDYPKPVCSPENMPVCGSDSKTYSNKCDFCNAVADSNGTLTLSHFGKC. Disulfide bonds link Cys-6-Cys-36, Cys-14-Cys-33, and Cys-22-Cys-54. A glycan (N-linked (GlcNAc...) asparagine) is linked at Asn-43.

Its subcellular location is the secreted. The sequence is that of Ovomucoid from Nycticorax nycticorax (Black-crowned night-heron).